We begin with the raw amino-acid sequence, 327 residues long: Annexin A8 (327 aa).

4 Annexin repeats span residues 21–92 (FNPD…ALMY), 93–164 (PPYR…CLLQ), 177–249 (GLAL…TVVK), and 253–324 (NLHS…SLVG). M266, G268, G270, and D310 together coordinate Ca(2+).

The protein belongs to the annexin family.

This protein is an anticoagulant protein that acts as an indirect inhibitor of the thromboplastin-specific complex, which is involved in the blood coagulation cascade. This Pan troglodytes (Chimpanzee) protein is Annexin A8 (ANXA8).